The chain runs to 929 residues: Protein translocase subunit SecA (929 aa).

ATP contacts are provided by residues Q87, 105–109 (GEGKT), and D512. Residues C914, C916, C925, and H926 each contribute to the Zn(2+) site.

The protein belongs to the SecA family. As to quaternary structure, monomer and homodimer. Part of the essential Sec protein translocation apparatus which comprises SecA, SecYEG and auxiliary proteins SecDF-YajC and YidC. Requires Zn(2+) as cofactor.

It is found in the cell inner membrane. It localises to the cytoplasm. It carries out the reaction ATP + H2O + cellular proteinSide 1 = ADP + phosphate + cellular proteinSide 2.. Part of the Sec protein translocase complex. Interacts with the SecYEG preprotein conducting channel. Has a central role in coupling the hydrolysis of ATP to the transfer of proteins into and across the cell membrane, serving both as a receptor for the preprotein-SecB complex and as an ATP-driven molecular motor driving the stepwise translocation of polypeptide chains across the membrane. The protein is Protein translocase subunit SecA of Psychrobacter arcticus (strain DSM 17307 / VKM B-2377 / 273-4).